Consider the following 130-residue polypeptide: Small ribosomal subunit protein uS9 (130 aa).

The protein belongs to the universal ribosomal protein uS9 family.

The chain is Small ribosomal subunit protein uS9 from Pseudomonas syringae pv. tomato (strain ATCC BAA-871 / DC3000).